The chain runs to 405 residues: Cytoplasmic tRNA 2-thiolation protein 2 (405 aa).

The protein belongs to the CTU2/NCS2 family.

The protein localises to the cytoplasm. It participates in tRNA modification; 5-methoxycarbonylmethyl-2-thiouridine-tRNA biosynthesis. Its function is as follows. Plays a central role in 2-thiolation of mcm(5)S(2)U at tRNA wobble positions of tRNA(Lys), tRNA(Glu) and tRNA(Gln). May act by forming a heterodimer with NCS6/CTU1 that ligates sulfur from thiocarboxylated URM1 onto the uridine of tRNAs at wobble position. The chain is Cytoplasmic tRNA 2-thiolation protein 2 from Drosophila simulans (Fruit fly).